The following is a 34-amino-acid chain: Protamine-Z1/Z2 (34 aa).

The interval 1-34 is disordered; it reads PRRRRRSSRPVRRRRRYRRSTVARRRRRVVRRRR.

As to expression, testis.

It localises to the nucleus. The protein resides in the chromosome. Its function is as follows. Protamines substitute for histones in the chromatin of sperm during the haploid phase of spermatogenesis. They compact sperm DNA into a highly condensed, stable and inactive complex. The polypeptide is Protamine-Z1/Z2 (Thunnus thynnus (Atlantic bluefin tuna)).